Here is an 885-residue protein sequence, read N- to C-terminus: Leucine--tRNA ligase (885 aa).

A 'HIGH' region motif is present at residues 48 to 58; sequence PYPSGKLHMGH. A 'KMSKS' region motif is present at residues 639–643; that stretch reads TMSKS. Lys642 contributes to the ATP binding site.

This sequence belongs to the class-I aminoacyl-tRNA synthetase family.

The protein localises to the cytoplasm. It carries out the reaction tRNA(Leu) + L-leucine + ATP = L-leucyl-tRNA(Leu) + AMP + diphosphate. In Bordetella parapertussis (strain 12822 / ATCC BAA-587 / NCTC 13253), this protein is Leucine--tRNA ligase.